A 181-amino-acid polypeptide reads, in one-letter code: Inner membrane-spanning protein YciB (181 aa).

The next 5 helical transmembrane spans lie at 8–28, 53–73, 76–96, 121–141, and 149–169; these read FPIICFFVAYKFWGIYIATAA, ITLIFILLLGSFTLVFHNAIF, WKPTIVYWIFAIVLFGSHFFG, LSWALFFLILGVLNLFVVYNF, and FKLFGTLVLTLVFILGQAFYI.

It belongs to the YciB family.

It is found in the cell inner membrane. In terms of biological role, plays a role in cell envelope biogenesis, maintenance of cell envelope integrity and membrane homeostasis. This is Inner membrane-spanning protein YciB from Coxiella burnetii (strain RSA 331 / Henzerling II).